The sequence spans 203 residues: Glycerol-3-phosphate acyltransferase (203 aa).

The next 5 helical transmembrane spans lie at 5–25 (IYIA…GLIL), 55–75 (LAAA…IVAA), 84–104 (IAAN…LFPV), 118–138 (IGVL…MWLA), and 159–179 (IFLW…LTLL).

This sequence belongs to the PlsY family. In terms of assembly, probably interacts with PlsX.

It is found in the cell inner membrane. It carries out the reaction an acyl phosphate + sn-glycerol 3-phosphate = a 1-acyl-sn-glycero-3-phosphate + phosphate. It functions in the pathway lipid metabolism; phospholipid metabolism. In terms of biological role, catalyzes the transfer of an acyl group from acyl-phosphate (acyl-PO(4)) to glycerol-3-phosphate (G3P) to form lysophosphatidic acid (LPA). This enzyme utilizes acyl-phosphate as fatty acyl donor, but not acyl-CoA or acyl-ACP. The chain is Glycerol-3-phosphate acyltransferase from Rhodopseudomonas palustris (strain ATCC BAA-98 / CGA009).